Consider the following 665-residue polypeptide: Methionine--tRNA ligase (665 aa).

The short motif at 12–22 (YYPSGKLHIGS) is the 'HIGH' region element. The short motif at 308 to 312 (KMSKS) is the 'KMSKS' region element. K311 lines the ATP pocket. A tRNA-binding domain is found at 562–665 (TFDAVEIRVA…PSVPNGSIIG (104 aa)).

Belongs to the class-I aminoacyl-tRNA synthetase family. MetG type 2B subfamily. Homodimer.

It is found in the cytoplasm. It catalyses the reaction tRNA(Met) + L-methionine + ATP = L-methionyl-tRNA(Met) + AMP + diphosphate. In terms of biological role, is required not only for elongation of protein synthesis but also for the initiation of all mRNA translation through initiator tRNA(fMet) aminoacylation. This is Methionine--tRNA ligase (metG) from Streptococcus pyogenes serotype M6 (strain ATCC BAA-946 / MGAS10394).